Reading from the N-terminus, the 509-residue chain is Tyrosine-protein kinase STK (509 aa).

Over residues Met-1–Pro-16 the composition is skewed to polar residues. Residues Met-1–Asp-23 are disordered. Gly-2 carries the N-myristoyl glycine lipid modification. Positions Pro-59 to Ser-120 constitute an SH3 domain. The SH2 domain occupies Trp-126–Cys-218. Residues Leu-240 to Val-495 form the Protein kinase domain. ATP contacts are provided by residues Leu-246–Val-254 and Lys-268. The Proton acceptor role is filled by Asp-360. At Tyr-390 the chain carries Phosphotyrosine; by autocatalysis.

Belongs to the protein kinase superfamily. Tyr protein kinase family. SRC subfamily.

The enzyme catalyses L-tyrosyl-[protein] + ATP = O-phospho-L-tyrosyl-[protein] + ADP + H(+). The sequence is that of Tyrosine-protein kinase STK (STK) from Hydra vulgaris (Hydra).